A 72-amino-acid chain; its full sequence is Translation initiation factor IF-1 (72 aa).

In terms of domain architecture, S1-like spans 1 to 72 (MSKDDCIEFE…TKGRIIYRMK (72 aa)).

It belongs to the IF-1 family. Component of the 30S ribosomal translation pre-initiation complex which assembles on the 30S ribosome in the order IF-2 and IF-3, IF-1 and N-formylmethionyl-tRNA(fMet); mRNA recruitment can occur at any time during PIC assembly.

The protein resides in the cytoplasm. Functionally, one of the essential components for the initiation of protein synthesis. Stabilizes the binding of IF-2 and IF-3 on the 30S subunit to which N-formylmethionyl-tRNA(fMet) subsequently binds. Helps modulate mRNA selection, yielding the 30S pre-initiation complex (PIC). Upon addition of the 50S ribosomal subunit IF-1, IF-2 and IF-3 are released leaving the mature 70S translation initiation complex. The protein is Translation initiation factor IF-1 of Xylella fastidiosa (strain 9a5c).